The following is a 98-amino-acid chain: NADH-ubiquinone oxidoreductase chain 4L (98 aa).

Transmembrane regions (helical) follow at residues 1–21, 30–50, and 61–81; these read MSMVYANIFLAFIMSLMGLLV, LLCLEGMMLSLFVMMTVTILI, and IILLVFAACEAALGLSLLVMV.

This sequence belongs to the complex I subunit 4L family. Core subunit of respiratory chain NADH dehydrogenase (Complex I) which is composed of 45 different subunits.

The protein resides in the mitochondrion inner membrane. The catalysed reaction is a ubiquinone + NADH + 5 H(+)(in) = a ubiquinol + NAD(+) + 4 H(+)(out). In terms of biological role, core subunit of the mitochondrial membrane respiratory chain NADH dehydrogenase (Complex I) which catalyzes electron transfer from NADH through the respiratory chain, using ubiquinone as an electron acceptor. Part of the enzyme membrane arm which is embedded in the lipid bilayer and involved in proton translocation. The sequence is that of NADH-ubiquinone oxidoreductase chain 4L (MT-ND4L) from Pagophilus groenlandicus (Harp seal).